We begin with the raw amino-acid sequence, 787 residues long: ATP-dependent RNA helicase dbp4 (787 aa).

The segment at 1–28 is disordered; sequence MAPAAGPRTGKHAKPQRSKTLKRKRGQE. Residues 9 to 25 are compositionally biased toward basic residues; that stretch reads TGKHAKPQRSKTLKRKR. Residues 47–75 carry the Q motif motif; the sequence is KSFSDLPLSEPTASGLASSHYKTLTDIQS. The Helicase ATP-binding domain maps to 78–252; sequence ISHALKGRDI…RLSLQDPEYV (175 aa). 91 to 98 is a binding site for ATP; it reads AKTGSGKT. Positions 200-203 match the DEAD box motif; the sequence is DEAD. The 160-residue stretch at 278 to 437 folds into the Helicase C-terminal domain; sequence KLDILWSFIR…SIKDQLQNMC (160 aa). Disordered regions lie at residues 494–542, 560–579, 586–618, and 653–776; these read GDDT…DRMF, DDGTMVAPNAGAGADADEDD, RRFDAGDKDLGSSGDEDDESEKGNKKNVKVRRE, and DEEQ…QTLE. The segment covering 522–542 has biased composition (basic and acidic residues); it reads GEKKSKKKEEPQVRTKYDRMF. Basic and acidic residues-rich tracts occupy residues 586-595 and 656-690; these read RRFDAGDKDL and QFKARGDAKDQQAKFLAEEAERTRLADMEDKEIAK. The segment covering 691–700 has biased composition (basic residues); that stretch reads QKRREKKEKR. The segment covering 741–755 has biased composition (basic and acidic residues); it reads KFTEANDREEAEPWY.

It belongs to the DEAD box helicase family. DDX10/DBP4 subfamily. Interacts with the U3 and U14 snoRNAs. Associates with pre-ribosomal complexes.

It localises to the nucleus. It is found in the nucleolus. It carries out the reaction ATP + H2O = ADP + phosphate + H(+). Functionally, ATP-dependent RNA helicase required for ribosome biogenesis. Involved in the release of U14 snoRNA in pre-ribosomal complexes. Required for pre-rRNA cleavage at site A2. This chain is ATP-dependent RNA helicase dbp4 (dbp4), found in Aspergillus fumigatus (strain ATCC MYA-4609 / CBS 101355 / FGSC A1100 / Af293) (Neosartorya fumigata).